Here is a 1244-residue protein sequence, read N- to C-terminus: Ras-specific guanine nucleotide-releasing factor 1 (1244 aa).

The PH 1 domain maps to 22 to 129; sequence DGTRKGYLSK…WVAAIARASY (108 aa). Residue serine 71 is modified to Phosphoserine; by PLK2. The 26-residue stretch at 204–229 folds into the IQ domain; the sequence is KKIKKVQSFLRGWLCRRKWKNIIQDY. Positions 240–426 constitute a DH domain; sequence KRNQVVFSML…EELSRVMHDE (187 aa). A PH 2 domain is found at 456 to 582; it reads TFVRQGSLIQ…WTSDIIQCVD (127 aa). A phosphoserine; by PLK2 mark is found at serine 575 and serine 611. The region spanning 629–743 is the N-terminal Ras-GEF domain; that stretch reads KVLQIRYASV…RRRKLSLNIP (115 aa). The tract at residues 707–730 is disordered; that stretch reads GDAPKSPRASRKFSSPPPLAIGTS. Serine 739 is modified (phosphoserine). 2 positions are modified to phosphoserine; by PLK2: serine 760 and serine 781. The segment at 800–840 is disordered; the sequence is TLEESSGFRKPTSDILKEESDDDQSDVDDTEVSPPTPKSFR. Residues 818–830 show a composition bias toward acidic residues; that stretch reads ESDDDQSDVDDTE. The residue at position 854 (serine 854) is a Phosphoserine; by PLK2. Residues 1009–1241 enclose the Ras-GEF domain; that stretch reads SAMEIAEQLT…YEASLRIEPK (233 aa).

As to quaternary structure, homooligomer and heterooligomer with RASGRF2. Interacts with USP8, thereby regulating its stability. Post-translationally, phosphorylated by PLK2, leading to ubiquitination and degradation by the proteasome. In terms of processing, ubiquitinated and degraded following phosphorylation by PLK2. Phosphorylated by SRC and LCK. Phosphorylation by LCK increases its capacity to stimulate the GDP/GTP exchange on Ras, whereas its phosphorylation by SRC seems not to have an effect on stimulation activity.

Promotes the exchange of Ras-bound GDP by GTP. The chain is Ras-specific guanine nucleotide-releasing factor 1 (Rasgrf1) from Rattus norvegicus (Rat).